We begin with the raw amino-acid sequence, 84 residues long: Small nuclear ribonucleoprotein E (84 aa).

Residues 13 to 84 enclose the Sm domain; it reads INFIFKLLQQ…GDNITLIQAI (72 aa).

The protein belongs to the snRNP Sm proteins family. In terms of assembly, component of the Sm core complex, present in spliceosomal snRNP U1, U2, U4/U6 and U5. The core complex contains smb1, smd1, smd2, smd3, sme1, smf1 and smg1 (Sm proteins B, D1, D2, D3, E, F and G, respectively), and is probably a heptameric ring structure.

The protein resides in the cytoplasm. Its subcellular location is the nucleus. Functionally, involved in pre-mRNA splicing. Binds and is required for the stability of snRNA U1, U2, U4 and U5 which contain a highly conserved structural motif called the Sm binding site. Involved in cap modification. This is Small nuclear ribonucleoprotein E from Schizosaccharomyces pombe (strain 972 / ATCC 24843) (Fission yeast).